The sequence spans 240 residues: Eukaryotic translation initiation factor 3 subunit J (240 aa).

Residues 19-95 (KADVNKWAGE…FANMTPEQQL (77 aa)) form a disordered region. Positions 28–45 (EDEDDVKDNWEDDDEEEE) are enriched in acidic residues. Over residues 46–56 (KKDAPKQEDTP) the composition is skewed to basic and acidic residues. The span at 60–71 (AKPKKAAQQKKL) shows a compositional bias: basic residues. 2 coiled-coil regions span residues 63–90 (KKAA…ANMT) and 176–235 (SNNI…DYDD). The segment covering 72-81 (KKEDLERLQR) has biased composition (basic and acidic residues).

It belongs to the eIF-3 subunit J family. As to quaternary structure, component of the eukaryotic translation initiation factor 3 (eIF-3) complex.

It localises to the cytoplasm. Component of the eukaryotic translation initiation factor 3 (eIF-3) complex, which is involved in protein synthesis of a specialized repertoire of mRNAs and, together with other initiation factors, stimulates binding of mRNA and methionyl-tRNAi to the 40S ribosome. The eIF-3 complex specifically targets and initiates translation of a subset of mRNAs involved in cell proliferation. This chain is Eukaryotic translation initiation factor 3 subunit J, found in Anopheles gambiae (African malaria mosquito).